The primary structure comprises 510 residues: Olfactomedin-4 (510 aa).

The signal sequence occupies residues Met1–Gly20. Residues Asn72 and Asn136 are each glycosylated (N-linked (GlcNAc...) asparagine). Positions Asp155 to Thr234 form a coiled coil. The 263-residue stretch at Ser245–Gln507 folds into the Olfactomedin-like domain. A disulfide bridge connects residues Cys246 and Cys437. Asn253 carries an N-linked (GlcNAc...) asparagine glycan.

As to quaternary structure, homomultimer; disulfide-linked. Interacts with NDUFA13. Interacts with cell surface lectins (locutions ricinus communis agglutinin I, concanavalin-A and wheat germ agglutinin) and cadherin. In terms of processing, N-glycosylated. Expressed during myeloid lineage development. Much higher expression in bone marrow neutrophils than in peripheral blood neutrophils (at protein level). Strongly expressed in the prostate, small intestine and colon and moderately expressed in the bone marrow and stomach. Overexpressed in some pancreatic cancer tissues.

Its subcellular location is the secreted. The protein resides in the extracellular space. It is found in the mitochondrion. Its function is as follows. May promote proliferation of pancreatic cancer cells by favoring the transition from the S to G2/M phase. In myeloid leukemic cell lines, inhibits cell growth and induces cell differentiation and apoptosis. May play a role in the inhibition of EIF4EBP1 phosphorylation/deactivation. Facilitates cell adhesion, most probably through interaction with cell surface lectins and cadherin. The sequence is that of Olfactomedin-4 (OLFM4) from Homo sapiens (Human).